The primary structure comprises 222 residues: Ribosomal RNA small subunit methyltransferase I (222 aa).

The protein belongs to the methyltransferase superfamily. RsmI family.

It localises to the cytoplasm. The enzyme catalyses cytidine(1402) in 16S rRNA + S-adenosyl-L-methionine = 2'-O-methylcytidine(1402) in 16S rRNA + S-adenosyl-L-homocysteine + H(+). Functionally, catalyzes the 2'-O-methylation of the ribose of cytidine 1402 (C1402) in 16S rRNA. This Thermotoga maritima (strain ATCC 43589 / DSM 3109 / JCM 10099 / NBRC 100826 / MSB8) protein is Ribosomal RNA small subunit methyltransferase I.